The primary structure comprises 187 residues: Early nodulin-55-2 (187 aa).

The first 26 residues, 1–26 (MASCLPNASPFLVMLAMCLLISTSEA), serve as a signal peptide directing secretion. In terms of domain architecture, Phytocyanin spans 27–132 (EKYVVGGSEK…GLKLAVLVIS (106 aa)). 3 N-linked (GlcNAc...) asparagine glycosylation sites follow: N78, N116, and N134. A disulfide bridge connects residues C85 and C120. A disordered region spans residues 138-167 (KNLLSPSPSPSPPPSSLLSPSPSPLPNNQG). Residues 144–162 (SPSPSPPPSSLLSPSPSPL) show a composition bias toward pro residues.

It belongs to the early nodulin-like (ENODL) family.

Its subcellular location is the symbiosome. The protein localises to the peribacteroid membrane. Its function is as follows. May act as a carbohydrate transporter. The polypeptide is Early nodulin-55-2 (Glycine max (Soybean)).